Reading from the N-terminus, the 261-residue chain is Small ribosomal subunit protein uS2 (261 aa).

A disordered region spans residues 222-261 (GKALREQDGEANEEQPISEEEKKEVLEEAMSEEDFEGDKE). Composition is skewed to acidic residues over residues 230–239 (GEANEEQPIS) and 248–261 (EEAM…GDKE).

It belongs to the universal ribosomal protein uS2 family.

The protein is Small ribosomal subunit protein uS2 of Campylobacter lari (strain RM2100 / D67 / ATCC BAA-1060).